The chain runs to 526 residues: UDP-glycosyltransferase UGT5 (526 aa).

At 1 to 474 (MIFFYFLTLT…TAAVDMPWYQ (474 aa)) the chain is on the lumenal side. Asn49, Asn124, and Asn283 each carry an N-linked (GlcNAc...) asparagine glycan. A helical transmembrane segment spans residues 475-495 (YLLLDVIAFLIFILVSVILII). Over 496-526 (YYGVKISLRYLCALIFGNSSSLKPTKKVKDN) the chain is Cytoplasmic.

Belongs to the UDP-glycosyltransferase family.

It is found in the microsome membrane. Its function is as follows. Catalyzes the transfer of a glycosyl group from a UDP-sugar to an acceptor molecule. This chain is UDP-glycosyltransferase UGT5, found in Dactylopius coccus (Cochineal).